The sequence spans 161 residues: uncharacterized protein (161 aa).

The protein belongs to the sapovirus VP3 family.

This is an uncharacterized protein from Sapporo virus (isolate GI/Human/Germany/pJG-Sap01) (Hu/Dresden/pJG-Sap01/DE).